Here is a 241-residue protein sequence, read N- to C-terminus: MTDWLYRYPPLYTGILLKRYKRFFADVQLTSGEVVTAHCPNTGPMTGVSTLGSAVQLSKSANPKRKLAYTLELIQVHDNEPTWVGVNTALPNQIVKLALAKYLFPELGNYSYIKSEVVYGVDKKSRVDFFLTGSDTERPIYLEVKNTTWTKGTLALFPDTETTRGQKHLRELTALLPQMRSVMLYFINRGDCTEFAPGDSTDPIYGKLLREAIALGLEVLPCRFDVTPEGIRYLGLAKLVI.

It belongs to the SfsA family.

The polypeptide is Sugar fermentation stimulation protein homolog (Nostoc sp. (strain PCC 7120 / SAG 25.82 / UTEX 2576)).